The chain runs to 137 residues: MEKTLSIIKPDAVKKGVIGKILDRFESNGLRIAAMKKVQLSKEQAENFYAVHKERPFFKDLVEFMISGPVVVSVLEGEGAVLKNRDLMGATNPKEAKAGTIRADFAESIDANAVHGSDSLENAKIEIEFFFKPNEIC.

Residues Lys-9, Phe-57, Arg-85, Thr-91, Arg-102, and Asn-112 each contribute to the ATP site. His-115 (pros-phosphohistidine intermediate) is an active-site residue.

The protein belongs to the NDK family. Homotetramer. The cofactor is Mg(2+).

It localises to the cytoplasm. The catalysed reaction is a 2'-deoxyribonucleoside 5'-diphosphate + ATP = a 2'-deoxyribonucleoside 5'-triphosphate + ADP. It catalyses the reaction a ribonucleoside 5'-diphosphate + ATP = a ribonucleoside 5'-triphosphate + ADP. Major role in the synthesis of nucleoside triphosphates other than ATP. The ATP gamma phosphate is transferred to the NDP beta phosphate via a ping-pong mechanism, using a phosphorylated active-site intermediate. The polypeptide is Nucleoside diphosphate kinase (Campylobacter jejuni subsp. jejuni serotype O:23/36 (strain 81-176)).